The following is a 951-amino-acid chain: Valine--tRNA ligase (951 aa).

Residues Pro42–His52 carry the 'HIGH' region motif. Residues Lys554–Ser558 carry the 'KMSKS' region motif. Lys557 lines the ATP pocket. The stretch at Ala880–Gly914 forms a coiled coil.

It belongs to the class-I aminoacyl-tRNA synthetase family. ValS type 1 subfamily. Monomer.

It is found in the cytoplasm. The enzyme catalyses tRNA(Val) + L-valine + ATP = L-valyl-tRNA(Val) + AMP + diphosphate. Catalyzes the attachment of valine to tRNA(Val). As ValRS can inadvertently accommodate and process structurally similar amino acids such as threonine, to avoid such errors, it has a 'posttransfer' editing activity that hydrolyzes mischarged Thr-tRNA(Val) in a tRNA-dependent manner. In Pectobacterium atrosepticum (strain SCRI 1043 / ATCC BAA-672) (Erwinia carotovora subsp. atroseptica), this protein is Valine--tRNA ligase.